The following is a 420-amino-acid chain: Protein STB1 (420 aa).

At serine 2 the chain carries N-acetylserine. Positions 2–70 (SQPQMSPEKE…DEDHKTLLEA (69 aa)) are interaction with SWI6. The residue at position 7 (serine 7) is a Phosphoserine. Disordered stretches follow at residues 30-187 (QLKL…SDNT) and 273-319 (DSPS…ELNG). The span at 43-55 (RKQDSTTKKRSGE) shows a compositional bias: basic and acidic residues. Phosphoserine is present on serine 72. Threonine 99 is modified (phosphothreonine). At serine 102 the chain carries Phosphoserine. Positions 106–122 (RKAEDRSQQIKPRKEDT) are enriched in basic and acidic residues. The span at 156–169 (NNNNSSNHSNNNNN) shows a compositional bias: low complexity. Positions 277–319 (LYLSNNNGSVQATLSPQQRRKPTTNTLHPPSNVPTTPSRELNG) are enriched in polar residues. Threonine 419 carries the post-translational modification Phosphothreonine.

Interacts with the ANK repeats of SWI6. The interaction with SWI6 is required for function. Interacts with SIN3. Phosphorylated by CDC28 in a cell cycle-dependent manner, inhibiting the interaction with SWI6.

It is found in the cytoplasm. It localises to the nucleus. Functionally, involved in the regulation and timing of MBF-dependent transcription in late G1 of the cell cycle. In Saccharomyces cerevisiae (strain ATCC 204508 / S288c) (Baker's yeast), this protein is Protein STB1 (STB1).